We begin with the raw amino-acid sequence, 692 residues long: Threonine--tRNA ligase (692 aa).

Positions 1-20 (MSAPAQPAPGVDGGDPSQAR) are disordered. One can recognise a TGS domain in the interval 1 to 74 (MSAPAQPAPG…DVDTDITPVA (74 aa)). A catalytic region spans residues 269 to 575 (DHRKLGVELD…LTEHYAGAFP (307 aa)). Residues Cys-374, His-425, and His-552 each coordinate Zn(2+).

The protein belongs to the class-II aminoacyl-tRNA synthetase family. In terms of assembly, homodimer. Requires Zn(2+) as cofactor.

The protein resides in the cytoplasm. It carries out the reaction tRNA(Thr) + L-threonine + ATP = L-threonyl-tRNA(Thr) + AMP + diphosphate + H(+). Its function is as follows. Catalyzes the attachment of threonine to tRNA(Thr) in a two-step reaction: L-threonine is first activated by ATP to form Thr-AMP and then transferred to the acceptor end of tRNA(Thr). Also edits incorrectly charged L-seryl-tRNA(Thr). This is Threonine--tRNA ligase from Mycobacterium tuberculosis (strain CDC 1551 / Oshkosh).